The primary structure comprises 189 residues: Putative manganese efflux pump MntP (189 aa).

6 consecutive transmembrane segments (helical) span residues Ile-6–Val-26, Leu-39–Leu-59, Trp-71–Ala-91, Leu-106–Val-126, Val-131–Met-151, and Val-169–Tyr-189.

This sequence belongs to the MntP (TC 9.B.29) family.

The protein localises to the cell inner membrane. Probably functions as a manganese efflux pump. This Desulfosudis oleivorans (strain DSM 6200 / JCM 39069 / Hxd3) (Desulfococcus oleovorans) protein is Putative manganese efflux pump MntP.